A 163-amino-acid polypeptide reads, in one-letter code: Early nodulin-like protein 20 (163 aa).

The N-terminal stretch at 1–25 (MMGKYLWALVYVTVMILIIVVEVES) is a signal peptide. The region spanning 26 to 126 (SLHRVGGGRY…GMKLAITVLP (101 aa)) is the Phytocyanin domain. Residues Asn42, Asn63, Asn73, Asn88, and Asn135 are each glycosylated (N-linked (GlcNAc...) asparagine). Residues Cys80 and Cys114 are joined by a disulfide bond. A lipid anchor (GPI-anchor amidated serine) is attached at Ser138. Residues 139 to 163 (TTTPLIPPNAITAAILIFAFKALLL) constitute a propeptide, removed in mature form.

This sequence belongs to the early nodulin-like (ENODL) family.

It is found in the cell membrane. May act as a carbohydrate transporter. The polypeptide is Early nodulin-like protein 20 (Arabidopsis thaliana (Mouse-ear cress)).